Here is a 369-residue protein sequence, read N- to C-terminus: Aminomethyltransferase (369 aa).

Belongs to the GcvT family. As to quaternary structure, the glycine cleavage system is composed of four proteins: P, T, L and H.

The enzyme catalyses N(6)-[(R)-S(8)-aminomethyldihydrolipoyl]-L-lysyl-[protein] + (6S)-5,6,7,8-tetrahydrofolate = N(6)-[(R)-dihydrolipoyl]-L-lysyl-[protein] + (6R)-5,10-methylene-5,6,7,8-tetrahydrofolate + NH4(+). In terms of biological role, the glycine cleavage system catalyzes the degradation of glycine. This is Aminomethyltransferase from Xanthomonas axonopodis pv. citri (strain 306).